We begin with the raw amino-acid sequence, 339 residues long: Phenylalanine--tRNA ligase alpha subunit (339 aa).

Glu250 contacts Mg(2+).

Belongs to the class-II aminoacyl-tRNA synthetase family. Phe-tRNA synthetase alpha subunit type 1 subfamily. As to quaternary structure, tetramer of two alpha and two beta subunits. Requires Mg(2+) as cofactor.

Its subcellular location is the cytoplasm. The enzyme catalyses tRNA(Phe) + L-phenylalanine + ATP = L-phenylalanyl-tRNA(Phe) + AMP + diphosphate + H(+). The sequence is that of Phenylalanine--tRNA ligase alpha subunit from Flavobacterium johnsoniae (strain ATCC 17061 / DSM 2064 / JCM 8514 / BCRC 14874 / CCUG 350202 / NBRC 14942 / NCIMB 11054 / UW101) (Cytophaga johnsonae).